The primary structure comprises 228 residues: AA9 family lytic polysaccharide monooxygenase A (228 aa).

Residues His1 and His86 each contribute to the Cu(2+) site. At His1 the chain carries Methylhistidine. 2 cysteine pairs are disulfide-bonded: Cys56-Cys178 and Cys97-Cys101. A glycan (N-linked (GlcNAc...) asparagine) is linked at Asn138. O2-binding residues include His164 and Gln173. Residue Tyr175 participates in Cu(2+) binding.

This sequence belongs to the polysaccharide monooxygenase AA9 family. The cofactor is Cu(2+). Post-translationally, the catalytically essential N-terminal histidine His-22 is post-translationally modified by methylation to prevent protonation of the histidine side chain, and protect the critical active site of the enzyme from oxidative damage.

Its subcellular location is the secreted. It carries out the reaction [(1-&gt;4)-beta-D-glucosyl]n+m + reduced acceptor + O2 = 4-dehydro-beta-D-glucosyl-[(1-&gt;4)-beta-D-glucosyl]n-1 + [(1-&gt;4)-beta-D-glucosyl]m + acceptor + H2O.. Its activity is regulated as follows. Small amounts of H(2)O(2) boost LPMO activity, while higher amounts lead to inactivation of the enzyme. Lytic polysaccharide monooxygenase (LPMO) that depolymerizes crystalline and amorphous polysaccharides via the oxidation of scissile alpha- or beta-(1-4)-glycosidic bonds, yielding C1 and C4 oxidation product. Catalysis by LPMOs requires the reduction of the active-site copper from Cu(II) to Cu(I) by a reducing agent and H(2)O(2) or O(2) as a cosubstrate. Is able to cleave cellulose and xylan to produce C1- and C4-oxidized products. The protein is AA9 family lytic polysaccharide monooxygenase A of Thermoascus aurantiacus.